A 478-amino-acid chain; its full sequence is Protein nucleotidyltransferase YdiU (478 aa).

ATP is bound by residues Gly84, Gly86, Arg87, Lys107, Asp119, Gly120, Arg170, and Arg177. Asp246 functions as the Proton acceptor in the catalytic mechanism. Residues Asn247 and Asp256 each coordinate Mg(2+). Residue Asp256 coordinates ATP.

It belongs to the SELO family. Requires Mg(2+) as cofactor. Mn(2+) serves as cofactor.

It catalyses the reaction L-seryl-[protein] + ATP = 3-O-(5'-adenylyl)-L-seryl-[protein] + diphosphate. The catalysed reaction is L-threonyl-[protein] + ATP = 3-O-(5'-adenylyl)-L-threonyl-[protein] + diphosphate. The enzyme catalyses L-tyrosyl-[protein] + ATP = O-(5'-adenylyl)-L-tyrosyl-[protein] + diphosphate. It carries out the reaction L-histidyl-[protein] + UTP = N(tele)-(5'-uridylyl)-L-histidyl-[protein] + diphosphate. It catalyses the reaction L-seryl-[protein] + UTP = O-(5'-uridylyl)-L-seryl-[protein] + diphosphate. The catalysed reaction is L-tyrosyl-[protein] + UTP = O-(5'-uridylyl)-L-tyrosyl-[protein] + diphosphate. Its function is as follows. Nucleotidyltransferase involved in the post-translational modification of proteins. It can catalyze the addition of adenosine monophosphate (AMP) or uridine monophosphate (UMP) to a protein, resulting in modifications known as AMPylation and UMPylation. In Escherichia coli (strain ATCC 8739 / DSM 1576 / NBRC 3972 / NCIMB 8545 / WDCM 00012 / Crooks), this protein is Protein nucleotidyltransferase YdiU.